The primary structure comprises 410 residues: Mannosyl phosphorylinositol ceramide synthase regulatory protein CSG2 (410 aa).

A signal peptide spans 1 to 17; it reads MSTTLLWFSSVIGYVIQ. Residues 18 to 50 lie on the Lumenal side of the membrane; that stretch reads TKCLSNIQSKKEISVGPNGTIATPETNGDNGNS. N-linked (GlcNAc...) asparagine glycosylation is found at Asn35 and Asn49. The helical transmembrane segment at 51–71 threads the bilayer; the sequence is SSLTFYLTFMYFASWLLLVPA. The Cytoplasmic portion of the chain corresponds to 72–141; the sequence is SRLWEKMRPM…SVATFKYVAK (70 aa). A helical membrane pass occupies residues 142–161; that stretch reads LTVLALIMIVADLTYNMALS. Residues 162–167 lie on the Lumenal side of the membrane; that stretch reads LSPAFD. A helical membrane pass occupies residues 168–187; it reads VALMQNTAIFEIVTLLYGVC. The Cytoplasmic segment spans residues 188-197; sequence GISRKNYVFR. The helical transmembrane segment at 198-217 threads the bilayer; that stretch reads NFLIMMNAVIGILIISYTKA. Residues 218 to 245 lie on the Lumenal side of the membrane; it reads TCDMLAGKLSVNPNTGELSDPFLFDRLK. The helical transmembrane segment at 246 to 265 threads the bilayer; it reads GALICGLGALIMGPFAVLWN. Residues 266–285 are Cytoplasmic-facing; it reads RWFCSNISKNENSAVVLVKQ. A helical membrane pass occupies residues 286–305; the sequence is STHMALIGIIGMVILLPFIP. The Lumenal portion of the chain corresponds to 306–324; the sequence is KFPSRESVESISLFYNDKS. A helical transmembrane segment spans residues 325–344; it reads FWFSLLGSIIFGSLPSLISI. Topologically, residues 345–355 are cytoplasmic; it reads LELNRKAPAEY. A helical transmembrane segment spans residues 356–374; the sequence is LTTCNLGAIIFMGLAEWVC. Residues 375–385 lie on the Lumenal side of the membrane; it reads EPTQTTIVRWE. A helical membrane pass occupies residues 386-404; it reads VIGYIMLTVSLLVLSVTLG. Residues 405–410 are Cytoplasmic-facing; the sequence is EGKYHH.

Heterodimer of CSH1 and CSG2, and SUR1 and CSG2.

Its subcellular location is the endoplasmic reticulum membrane. Required for calcium regulation. May regulate calcium accumulation by a non-vacuole organelle. Also regulates the activity of CSH1 and SUR1 during mannosyl phosphorylinositol ceramide synthesis. This Saccharomyces cerevisiae (strain ATCC 204508 / S288c) (Baker's yeast) protein is Mannosyl phosphorylinositol ceramide synthase regulatory protein CSG2 (CSG2).